A 239-amino-acid polypeptide reads, in one-letter code: Ribosomal RNA large subunit methyltransferase E (239 aa).

The tract at residues 1 to 20 is disordered; sequence MTKAPIAGNRTGRKLGQRVK. Over residues 11 to 20 the composition is skewed to basic residues; it reads TGRKLGQRVK. The S-adenosyl-L-methionine site is built by Gly-81, Trp-83, Asp-104, Asp-120, and Asp-144. The active-site Proton acceptor is the Lys-184.

This sequence belongs to the class I-like SAM-binding methyltransferase superfamily. RNA methyltransferase RlmE family.

The protein localises to the cytoplasm. The enzyme catalyses uridine(2552) in 23S rRNA + S-adenosyl-L-methionine = 2'-O-methyluridine(2552) in 23S rRNA + S-adenosyl-L-homocysteine + H(+). Its function is as follows. Specifically methylates the uridine in position 2552 of 23S rRNA at the 2'-O position of the ribose in the fully assembled 50S ribosomal subunit. The sequence is that of Ribosomal RNA large subunit methyltransferase E from Rhizobium etli (strain ATCC 51251 / DSM 11541 / JCM 21823 / NBRC 15573 / CFN 42).